The primary structure comprises 441 residues: MSQLQSLRGMVDLLPEQTRRWQAVEAVARDHFRRAGVEEIRTPLLEVTELFARGIGEGTDVVGKEMYSFLDRGERSCTLRPEGTASVVRAAMQHGLLNQGAQKLWYAGPMFRYERPQAGRQRQFHQIGVECLGVSSARSDVEAIALAWDLLAALGVQGLELEINSLGTPEDRQCYRAELVAWLEARRDQLDADSQQRLTTNPLRILDSKNKATQALLADAPTLLEALSPESAQRFAQVQALLHQLGIPFKLNTRLVRGLDYYGHTAFEITSDQLGAQATVCGGGRYDGLVEQLGGPATPAIGWALGMERLLLVLEAAAKADPAGAAAQLTMSAPPEVYVVNRGEAAEAVALSLTRSLRLAGVAVELDGSGAAFGKQFKRADRSGAPWAAVIGDEEAASGVVCLKPLLREGGDQRLPLSDPAAIVTILHSAPKSSLESEEER.

Belongs to the class-II aminoacyl-tRNA synthetase family. As to quaternary structure, homodimer.

The protein localises to the cytoplasm. The catalysed reaction is tRNA(His) + L-histidine + ATP = L-histidyl-tRNA(His) + AMP + diphosphate + H(+). The protein is Histidine--tRNA ligase of Synechococcus sp. (strain WH7803).